We begin with the raw amino-acid sequence, 75 residues long: Acylphosphatase-like protein MJ1405 (75 aa).

Residues 8 to 75 (TYEIIIYGRI…TNFWRVRKCK (68 aa)) form the Acylphosphatase-like domain.

The polypeptide is Acylphosphatase-like protein MJ1405 (Methanocaldococcus jannaschii (strain ATCC 43067 / DSM 2661 / JAL-1 / JCM 10045 / NBRC 100440) (Methanococcus jannaschii)).